We begin with the raw amino-acid sequence, 316 residues long: Transaldolase B (316 aa).

The active-site Schiff-base intermediate with substrate is the K131.

The protein belongs to the transaldolase family. Type 1 subfamily. As to quaternary structure, homodimer.

It is found in the cytoplasm. It carries out the reaction D-sedoheptulose 7-phosphate + D-glyceraldehyde 3-phosphate = D-erythrose 4-phosphate + beta-D-fructose 6-phosphate. The protein operates within carbohydrate degradation; pentose phosphate pathway; D-glyceraldehyde 3-phosphate and beta-D-fructose 6-phosphate from D-ribose 5-phosphate and D-xylulose 5-phosphate (non-oxidative stage): step 2/3. In terms of biological role, transaldolase is important for the balance of metabolites in the pentose-phosphate pathway. The chain is Transaldolase B (talB) from Pasteurella multocida (strain Pm70).